Consider the following 233-residue polypeptide: MADS-box transcription factor 20 (233 aa).

The MADS-box domain maps to 1-61; sequence MGRGKVQVRR…GNLFHYASSH (61 aa). A K-box domain is found at 91 to 184; sequence EGSMSYDHIK…PTKAAAPPAC (94 aa).

In terms of tissue distribution, expressed in developing seeds and seedling shoots.

It is found in the nucleus. Its function is as follows. Probable transcription factor. This Oryza sativa subsp. japonica (Rice) protein is MADS-box transcription factor 20 (MADS20).